Here is a 150-residue protein sequence, read N- to C-terminus: Copper transporter 3 (150 aa).

The next 2 helical transmembrane spans lie at 50–70 (GGMY…LEFL) and 100–120 (LAYL…LAAV).

It belongs to the copper transporter (Ctr) (TC 1.A.56) family. SLC31A subfamily.

It localises to the membrane. Involved in the transport of copper. The chain is Copper transporter 3 (COPT3) from Oryza sativa subsp. japonica (Rice).